The sequence spans 957 residues: MFSQLDFTGLPLANTGENRPLAIAVAMSNFVKKTLQKQADLRDDWQRKLPTLADCGNYAERLTIYLSTINDEVQLSHCLRNFRHREMARLSFIQSNKLATVEFVFEQLSDLAEAIILAARDWLFTRCCAEYGTPVNGLGEIQPLLIIGMGKLGGRELNFSSDIDLIFTYPEAGQTVGGHKTIENSKFFTRLGQRLIKALDEITVDGFVYRTDMRLRPFGDNGALVLSFAAMEDYYQEQGRDWERYAMIKAKILGEDLTDVNHRYLQQMLRPFVYRRYLDFSAIQSLREMKQKISREVLRRNLQDNIKLGAGGIREIEFIVQTFQMIRGGRDKILQQRSLLQVLPHLVTLNLLTKQQAKHLGDAYIFHRQLENVLQAIDDQQTQSLPADAKNQARIMYACQSYWQKDQQNQPLMIEYHWQSWQQFLSTLAQHQQHVRVIFNQLIGEEEQANQSPVNEQLAIWQDILHPEIRQLELAEVLRDYPVATEDYATIFHLLANTLQDWSKRPIGVRGRKVLSQLMPKVMHSICSKTDYLVVLPRLLNIIDRVTTRTTYLELLQEKDQILPLLERLCGHSIMVAEQIARYPMLLDEFIINKSLMKVIEFEQYKTELTEYLIRIPEEDEEALIDALRQFKQGHLLRIAVADILGVLPVMKISDHLTYLAAAIISEVVNMAWKSLVKRFGKPTHLAEDERGFAVIAYGKLGGLELGYNSDLDLVFLHNAPLEGETSGRRSISNHQFYLKLAQKINSIFNLNTSAGVLYEVDMRLRPSGDAGLLVSTFQAYQYYQQHEAWTWETQALVRGRCVYGSASLIDEFSRIRRTTLCLARTRGRLRQEISQMRHKMYQHLTKTSTGQFNLKTDQGGITDIEFIAQSIVLEYAHCYPEMAKWSDNVRIFTAAIECGILSQHIGEGLKNAYTRIRNRIHQLNLLQLPSIVNDTEFVSERAFVTKIWQQIFTDNE.

The tract at residues 1–447 (MFSQLDFTGL…IFNQLIGEEE (447 aa)) is adenylyl removase. Residues 454 to 957 (VNEQLAIWQD…IWQQIFTDNE (504 aa)) form an adenylyl transferase region.

The protein belongs to the GlnE family. Mg(2+) serves as cofactor.

The catalysed reaction is [glutamine synthetase]-O(4)-(5'-adenylyl)-L-tyrosine + phosphate = [glutamine synthetase]-L-tyrosine + ADP. It carries out the reaction [glutamine synthetase]-L-tyrosine + ATP = [glutamine synthetase]-O(4)-(5'-adenylyl)-L-tyrosine + diphosphate. In terms of biological role, involved in the regulation of glutamine synthetase GlnA, a key enzyme in the process to assimilate ammonia. When cellular nitrogen levels are high, the C-terminal adenylyl transferase (AT) inactivates GlnA by covalent transfer of an adenylyl group from ATP to specific tyrosine residue of GlnA, thus reducing its activity. Conversely, when nitrogen levels are low, the N-terminal adenylyl removase (AR) activates GlnA by removing the adenylyl group by phosphorolysis, increasing its activity. The regulatory region of GlnE binds the signal transduction protein PII (GlnB) which indicates the nitrogen status of the cell. The sequence is that of Bifunctional glutamine synthetase adenylyltransferase/adenylyl-removing enzyme from Haemophilus ducreyi (strain 35000HP / ATCC 700724).